Reading from the N-terminus, the 360-residue chain is Peptide chain release factor 1 (360 aa).

Q237 carries the post-translational modification N5-methylglutamine.

It belongs to the prokaryotic/mitochondrial release factor family. In terms of processing, methylated by PrmC. Methylation increases the termination efficiency of RF1.

The protein localises to the cytoplasm. Peptide chain release factor 1 directs the termination of translation in response to the peptide chain termination codons UAG and UAA. The protein is Peptide chain release factor 1 of Ectopseudomonas mendocina (strain ymp) (Pseudomonas mendocina).